A 79-amino-acid polypeptide reads, in one-letter code: DNA gyrase inhibitor YacG (79 aa).

Residues Cys-7, Cys-10, Cys-26, and Cys-30 each coordinate Zn(2+).

This sequence belongs to the DNA gyrase inhibitor YacG family. As to quaternary structure, interacts with GyrB. Requires Zn(2+) as cofactor.

In terms of biological role, inhibits all the catalytic activities of DNA gyrase by preventing its interaction with DNA. Acts by binding directly to the C-terminal domain of GyrB, which probably disrupts DNA binding by the gyrase. The protein is DNA gyrase inhibitor YacG of Shewanella halifaxensis (strain HAW-EB4).